Reading from the N-terminus, the 360-residue chain is Squamosa promoter-binding-like protein 7 (360 aa).

Positions 74–89 (AQGSGGGGGGGGGGSA) are enriched in gly residues. Positions 74–98 (AQGSGGGGGGGGGGSADQGKRKEKA) are disordered. An SBP-type zinc finger spans residues 105-182 (VPRCQVEGCD…AGHNERRRRS (78 aa)). Zn(2+) contacts are provided by C108, C113, C130, H133, C149, C152, H156, and C168. A Bipartite nuclear localization signal motif is present at residues 165-181 (KKSCRRRLAGHNERRRR). The segment covering 172-182 (LAGHNERRRRS) has biased composition (basic residues). Disordered regions lie at residues 172–196 (LAGHNERRRRSNASEAMARGSAHPH), 261–306 (FFSD…HEHQ), and 320–360 (AAGG…ARVV).

As to expression, expressed in young panicles.

It localises to the nucleus. Its function is as follows. Trans-acting factor that binds specifically to the consensus nucleotide sequence 5'-TNCGTACAA-3'. May be involved in panicle development. This is Squamosa promoter-binding-like protein 7 (SPL7) from Oryza sativa subsp. indica (Rice).